Reading from the N-terminus, the 329-residue chain is 7,8-didemethyl-8-hydroxy-5-deazariboflavin synthase (329 aa).

Residues 1 to 235 (MFIPVTNICR…SDVSVQVAPN (235 aa)) enclose the Radical SAM core domain. Cys-9, Cys-13, and Cys-16 together coordinate [4Fe-4S] cluster.

Belongs to the radical SAM superfamily. CofG family. Consists of two subunits, CofG and CofH. [4Fe-4S] cluster serves as cofactor.

The enzyme catalyses 5-amino-5-(4-hydroxybenzyl)-6-(D-ribitylimino)-5,6-dihydrouracil + S-adenosyl-L-methionine = 7,8-didemethyl-8-hydroxy-5-deazariboflavin + 5'-deoxyadenosine + L-methionine + NH4(+) + H(+). Its pathway is cofactor biosynthesis; coenzyme F0 biosynthesis. In terms of biological role, catalyzes the radical-mediated synthesis of 7,8-didemethyl-8-hydroxy-5-deazariboflavin from 5-amino-5-(4-hydroxybenzyl)-6-(D-ribitylimino)-5,6-dihydrouracil. In Methanosarcina acetivorans (strain ATCC 35395 / DSM 2834 / JCM 12185 / C2A), this protein is 7,8-didemethyl-8-hydroxy-5-deazariboflavin synthase.